Here is a 549-residue protein sequence, read N- to C-terminus: Glucose-6-phosphate isomerase (549 aa).

Glu353 acts as the Proton donor in catalysis. Active-site residues include His384 and Lys512.

The protein belongs to the GPI family.

The protein localises to the cytoplasm. It carries out the reaction alpha-D-glucose 6-phosphate = beta-D-fructose 6-phosphate. It participates in carbohydrate biosynthesis; gluconeogenesis. Its pathway is carbohydrate degradation; glycolysis; D-glyceraldehyde 3-phosphate and glycerone phosphate from D-glucose: step 2/4. In terms of biological role, catalyzes the reversible isomerization of glucose-6-phosphate to fructose-6-phosphate. The polypeptide is Glucose-6-phosphate isomerase (Alteromonas mediterranea (strain DSM 17117 / CIP 110805 / LMG 28347 / Deep ecotype)).